Reading from the N-terminus, the 127-residue chain is uncharacterized protein (127 aa).

Residues 71–126 are a coiled coil; it reads FYLREYRRIRRRIKELKNRAKYISKGEIAYNPKIMKEVEALKEKLSEIEKKIEELK.

This is an uncharacterized protein from Aquifex aeolicus (strain VF5).